The primary structure comprises 278 residues: Large ribosomal subunit protein uL2 (278 aa).

Positions 223–278 are disordered; the sequence is GVAMNPIDHPHGGGEGRTSGGRHPVTPWGFPTKGKKTRSNKRTDTFIVSSRHNRKK.

This sequence belongs to the universal ribosomal protein uL2 family. As to quaternary structure, part of the 50S ribosomal subunit. Forms a bridge to the 30S subunit in the 70S ribosome.

Its function is as follows. One of the primary rRNA binding proteins. Required for association of the 30S and 50S subunits to form the 70S ribosome, for tRNA binding and peptide bond formation. It has been suggested to have peptidyltransferase activity; this is somewhat controversial. Makes several contacts with the 16S rRNA in the 70S ribosome. The sequence is that of Large ribosomal subunit protein uL2 from Methylobacterium sp. (strain 4-46).